Here is a 216-residue protein sequence, read N- to C-terminus: Cell envelope integrity protein Cei (216 aa).

The chain crosses the membrane as a helical span at residues 25-45 (PAIVVVAFLVVVTCVMWTLAL).

The protein resides in the cell membrane. Contributes to cell envelope integrity and virulence. This is Cell envelope integrity protein Cei from Mycobacterium tuberculosis (strain ATCC 25618 / H37Rv).